Here is a 387-residue protein sequence, read N- to C-terminus: Alpha-sarcoglycan (387 aa).

The first 23 residues, 1 to 23, serve as a signal peptide directing secretion; it reads MAETLFWTPLLVVLLAGLGDTEA. Residues 24 to 290 lie on the Extracellular side of the membrane; sequence QQTTLHPLVG…APDRDFLVDA (267 aa). Residues N174 and N246 are each glycosylated (N-linked (GlcNAc...) asparagine). The helical transmembrane segment at 291–311 threads the bilayer; it reads LVTLLVPLLVALLLTLLLAYV. Residues 312–387 are Cytoplasmic-facing; that stretch reads MCCRREGRLK…AQVPLILDQH (76 aa). S377 bears the Phosphoserine mark.

This sequence belongs to the sarcoglycan alpha/epsilon family. In terms of assembly, interacts with the syntrophin SNTA1. Cross-link to form 2 major subcomplexes: one consisting of SGCB, SGCD and SGCG and the other consisting of SGCB and SGCD. The association between SGCB and SGCG is particularly strong while SGCA is loosely associated with the other sarcoglycans. In terms of tissue distribution, most strongly expressed in skeletal muscle. Also expressed in cardiac muscle and, at much lower levels, in lung. In the fetus, most abundant in cardiac muscle and, at lower levels, in lung. Also detected in liver and kidney. Not expressed in brain.

It localises to the cell membrane. The protein localises to the sarcolemma. Its subcellular location is the cytoplasm. The protein resides in the cytoskeleton. Its function is as follows. Component of the sarcoglycan complex, a subcomplex of the dystrophin-glycoprotein complex which forms a link between the F-actin cytoskeleton and the extracellular matrix. The sequence is that of Alpha-sarcoglycan (SGCA) from Homo sapiens (Human).